The following is a 397-amino-acid chain: NADH-quinone oxidoreductase subunit H 1 (397 aa).

10 consecutive transmembrane segments (helical) span residues 7–27 (FIFISLVKAAVIFGVLMTTLA), 84–104 (PFLAITMALLSISVIPFGPVI), 120–140 (IGVLFILAVSSMGVYGIALAG), 156–176 (SAQMISYELPMSLAIAAPLLI), 198–218 (LLSGPFPQVISFIIFIIAAFA), 258–278 (MITVSAMATLLFLGGWMAPWP), 279–299 (AAYGSSLVPSILFGISGLVLL), 313–333 (TFPAFGIIFLGIAGIFLLPMV), 337–357 (LLPLFWFCAKTGAILFAFMWI), and 376–396 (FLFPVAMLNLLVTGFLVAWTT).

The protein belongs to the complex I subunit 1 family. NDH-1 is composed of 14 different subunits. Subunits NuoA, H, J, K, L, M, N constitute the membrane sector of the complex.

Its subcellular location is the cell inner membrane. The catalysed reaction is a quinone + NADH + 5 H(+)(in) = a quinol + NAD(+) + 4 H(+)(out). NDH-1 shuttles electrons from NADH, via FMN and iron-sulfur (Fe-S) centers, to quinones in the respiratory chain. The immediate electron acceptor for the enzyme in this species is believed to be ubiquinone. Couples the redox reaction to proton translocation (for every two electrons transferred, four hydrogen ions are translocated across the cytoplasmic membrane), and thus conserves the redox energy in a proton gradient. This subunit may bind ubiquinone. This chain is NADH-quinone oxidoreductase subunit H 1, found in Solibacter usitatus (strain Ellin6076).